The chain runs to 477 residues: AAA-ATPase At3g28600 (477 aa).

The first 26 residues, 1–26 (MMMGNTFGSSLASLFFLWATIQQIFP), serve as a signal peptide directing secretion. ATP is bound at residue 245-252 (GPPGTGKS).

It belongs to the AAA ATPase family. BCS1 subfamily. It depends on Mg(2+) as a cofactor.

The enzyme catalyses ATP + H2O = ADP + phosphate + H(+). The protein is AAA-ATPase At3g28600 of Arabidopsis thaliana (Mouse-ear cress).